A 315-amino-acid chain; its full sequence is Olfactory receptor 5M10 (315 aa).

Residues 1–25 (MLSPNHTIVTEFILLGLTDDPVLEK) lie on the Extracellular side of the membrane. The N-linked (GlcNAc...) asparagine glycan is linked to asparagine 5. A helical membrane pass occupies residues 26–46 (ILFGVFLAIYLITLAGNLCMI). Residues 47–54 (LLIRTNSQ) lie on the Cytoplasmic side of the membrane. Residues 55-75 (LQTPMYFFLGHLSFVDICYSS) traverse the membrane as a helical segment. Topologically, residues 76-99 (NVTPNMLHNFLSEQKTISYAGCFT) are extracellular. A disulfide bridge connects residues cysteine 97 and cysteine 189. Residues 100-120 (QCLLFIALVITEFYFLASMAL) form a helical membrane-spanning segment. At 121 to 139 (DRYVAICSPLHYSSRMSKN) the chain is on the cytoplasmic side. A helical membrane pass occupies residues 140-160 (ICISLVTVPYMYGFLNGLSQT). Topologically, residues 161-196 (LLTFHLSFCGSLEINHFYCADPPLIMLACSDTRVKK) are extracellular. The helical transmembrane segment at 197–217 (MAMFVVAGFTLSSSLFIILLS) threads the bilayer. The Cytoplasmic portion of the chain corresponds to 218-237 (YLFIFAAIFRIRSAEGRHKA). A helical membrane pass occupies residues 238 to 258 (FSTCASHLTIVTLFYGTLFCM). Residues 259 to 271 (YVRPPSEKSVEES) are Extracellular-facing. Residues 272-292 (KIIAVFYTFLSPMLNPLIYSL) traverse the membrane as a helical segment. Residues 293–315 (RNRDVILAIQQMIRGKSFCKIAV) are Cytoplasmic-facing.

The protein belongs to the G-protein coupled receptor 1 family.

The protein resides in the cell membrane. In terms of biological role, odorant receptor. The sequence is that of Olfactory receptor 5M10 (OR5M10) from Homo sapiens (Human).